The chain runs to 628 residues: Alpha-L-arabinofuranosidase A (628 aa).

An N-terminal signal peptide occupies residues 1 to 25; sequence MVAFSALSGVSALSLLLCLVQHAHG. 8 N-linked (GlcNAc...) asparagine glycosylation sites follow: N36, N51, N74, N152, N171, N260, N359, and N493.

Belongs to the glycosyl hydrolase 51 family.

Its subcellular location is the secreted. The enzyme catalyses Hydrolysis of terminal non-reducing alpha-L-arabinofuranoside residues in alpha-L-arabinosides.. The protein operates within glycan metabolism; L-arabinan degradation. Functionally, alpha-L-arabinofuranosidase involved in the degradation of arabinoxylan, a major component of plant hemicellulose. Acts only on small linear 1,5-alpha-linked L-arabinofuranosyl oligosaccharides. This chain is Alpha-L-arabinofuranosidase A (abfA), found in Aspergillus kawachii (strain NBRC 4308) (White koji mold).